Reading from the N-terminus, the 246-residue chain is 1-(5-phosphoribosyl)-5-[(5-phosphoribosylamino)methylideneamino] imidazole-4-carboxamide isomerase (246 aa).

The active-site Proton acceptor is aspartate 12. The active-site Proton donor is aspartate 134.

This sequence belongs to the HisA/HisF family.

It is found in the cytoplasm. The enzyme catalyses 1-(5-phospho-beta-D-ribosyl)-5-[(5-phospho-beta-D-ribosylamino)methylideneamino]imidazole-4-carboxamide = 5-[(5-phospho-1-deoxy-D-ribulos-1-ylimino)methylamino]-1-(5-phospho-beta-D-ribosyl)imidazole-4-carboxamide. Its pathway is amino-acid biosynthesis; L-histidine biosynthesis; L-histidine from 5-phospho-alpha-D-ribose 1-diphosphate: step 4/9. This Psychrobacter cryohalolentis (strain ATCC BAA-1226 / DSM 17306 / VKM B-2378 / K5) protein is 1-(5-phosphoribosyl)-5-[(5-phosphoribosylamino)methylideneamino] imidazole-4-carboxamide isomerase.